The chain runs to 148 residues: Small ribosomal subunit protein bS6 (148 aa).

Residues 96 to 148 (HEEGQSAMLTRRDDRRERDGDDRPRRREGGFDRGDRGDRGPRRPRDNEAGEGA) are disordered.

This sequence belongs to the bacterial ribosomal protein bS6 family.

Functionally, binds together with bS18 to 16S ribosomal RNA. This chain is Small ribosomal subunit protein bS6, found in Brucella melitensis biotype 1 (strain ATCC 23456 / CCUG 17765 / NCTC 10094 / 16M).